We begin with the raw amino-acid sequence, 222 residues long: Eukaryotic translation initiation factor 3 subunit K (222 aa).

In terms of domain architecture, PCI spans 46–208 (YDLEANLAVL…KIKTKNITEK (163 aa)).

The protein belongs to the eIF-3 subunit K family. In terms of assembly, component of the eukaryotic translation initiation factor 3 (eIF-3) complex. The eIF-3 complex interacts with pix.

Its subcellular location is the cytoplasm. Component of the eukaryotic translation initiation factor 3 (eIF-3) complex, which is involved in protein synthesis of a specialized repertoire of mRNAs and, together with other initiation factors, stimulates binding of mRNA and methionyl-tRNAi to the 40S ribosome. The eIF-3 complex specifically targets and initiates translation of a subset of mRNAs involved in cell proliferation. The protein is Eukaryotic translation initiation factor 3 subunit K of Drosophila sechellia (Fruit fly).